A 327-amino-acid chain; its full sequence is Microtubule-associated protein RP/EB family member 2 (327 aa).

The disordered stretch occupies residues 1 to 21 (MPGPTQTLSPNGENNNDIIQD). At serine 9 the chain carries Phosphoserine. The Calponin-homology (CH) domain occupies 57 to 159 (TMSRHDIIAW…FIQWFKKFYD (103 aa)). The residue at position 167 (tyrosine 167) is a Phosphotyrosine. Disordered stretches follow at residues 171–240 (EARQ…DKDL) and 299–327 (ASEEHEGHTEEPEAEEQAHEQQPPQQEEY). The tract at residues 187 to 327 (QIFNLPKKSH…EQQPPQQEEY (141 aa)) is DCTN1-binding. Residues 200-234 (SPTAGAAKSSPAAKPGSTPSRPSSAKRASSSGSAS) show a composition bias toward low complexity. A Phosphoserine modification is found at serine 219. Residues 236–306 (SDKDLETQVI…LYASEEHEGH (71 aa)) form the EB1 C-terminal domain. The segment at 259–302 (EGVEKERDFYFGKLREIELLCQEHGQENDDLVQRLMDVLYASEE) is APC-binding. Residues 300–317 (SEEHEGHTEEPEAEEQAH) are compositionally biased toward basic and acidic residues. The span at 318–327 (EQQPPQQEEY) shows a compositional bias: low complexity.

Belongs to the MAPRE family. As to quaternary structure, interacts with DCTN1. Interacts with APC (via C-terminal). Interacts with monomeric and polymerized tubulin. Interacts with SLAIN1. Interacts (via the N-terminal region) with BAG1.

The protein resides in the cytoplasm. It is found in the cytoskeleton. May be involved in microtubule polymerization, and spindle function by stabilizing microtubules and anchoring them at centrosomes. May play a role in cell migration. This chain is Microtubule-associated protein RP/EB family member 2 (MAPRE2), found in Pongo abelii (Sumatran orangutan).